The chain runs to 781 residues: Matrix non-peptidase homolog 1 (781 aa).

Residues 1–27 (MTPPPASPSKKAKSSWLLIALIAVIIG) form the signal peptide. Asparagine 54 carries N-linked (GlcNAc...) asparagine glycosylation. Positions 63-94 (TSKATVSTTTTQSATTPSTTTTRIEETTTTTS) are enriched in low complexity. A disordered region spans residues 63–113 (TSKATVSTTTTQSATTPSTTTTRIEETTTTTSGAFDESVKNSEASTSTIPT). N-linked (GlcNAc...) asparagine glycosylation is found at asparagine 183, asparagine 341, asparagine 375, and asparagine 520.

This chain is Matrix non-peptidase homolog 1 (mnp-1), found in Caenorhabditis elegans.